Here is a 476-residue protein sequence, read N- to C-terminus: UDP-N-acetylmuramate--L-alanine ligase (476 aa).

Residue 125-131 participates in ATP binding; sequence GTHGKTT.

It belongs to the MurCDEF family.

It localises to the cytoplasm. The enzyme catalyses UDP-N-acetyl-alpha-D-muramate + L-alanine + ATP = UDP-N-acetyl-alpha-D-muramoyl-L-alanine + ADP + phosphate + H(+). It functions in the pathway cell wall biogenesis; peptidoglycan biosynthesis. In terms of biological role, cell wall formation. The sequence is that of UDP-N-acetylmuramate--L-alanine ligase from Histophilus somni (strain 129Pt) (Haemophilus somnus).